The following is a 245-amino-acid chain: Orotidine 5'-phosphate decarboxylase (245 aa).

Substrate is bound by residues Asp22, Lys44, 71–80 (DLKFHDIPNT), Thr131, Arg192, Gln201, Gly221, and Arg222. Lys73 (proton donor) is an active-site residue.

It belongs to the OMP decarboxylase family. Type 1 subfamily. As to quaternary structure, homodimer.

The enzyme catalyses orotidine 5'-phosphate + H(+) = UMP + CO2. The protein operates within pyrimidine metabolism; UMP biosynthesis via de novo pathway; UMP from orotate: step 2/2. In terms of biological role, catalyzes the decarboxylation of orotidine 5'-monophosphate (OMP) to uridine 5'-monophosphate (UMP). In Escherichia coli O157:H7, this protein is Orotidine 5'-phosphate decarboxylase.